The chain runs to 215 residues: Adenylate kinase (215 aa).

Position 10–15 (10–15 (GAGKGT)) interacts with ATP. The interval 30-59 (STGDMFRAAIKDQTPLGQEAKSYMDKGELV) is NMP. AMP-binding positions include threonine 31, arginine 36, 57–59 (ELV), 85–88 (GFPR), and glutamine 92. An LID region spans residues 126–163 (GRRICPTCGATYHVIYNPPKVEGVCDIDGSALVQREDD). Arginine 127 is a binding site for ATP. Cysteine 130 and cysteine 133 together coordinate Zn(2+). ATP is bound at residue 136–137 (TY). Positions 150 and 153 each coordinate Zn(2+). Positions 160 and 171 each coordinate AMP. Position 199 (arginine 199) interacts with ATP.

Belongs to the adenylate kinase family. As to quaternary structure, monomer.

The protein resides in the cytoplasm. The catalysed reaction is AMP + ATP = 2 ADP. It functions in the pathway purine metabolism; AMP biosynthesis via salvage pathway; AMP from ADP: step 1/1. Its function is as follows. Catalyzes the reversible transfer of the terminal phosphate group between ATP and AMP. Plays an important role in cellular energy homeostasis and in adenine nucleotide metabolism. This chain is Adenylate kinase, found in Exiguobacterium sibiricum (strain DSM 17290 / CCUG 55495 / CIP 109462 / JCM 13490 / 255-15).